Consider the following 259-residue polypeptide: Adenosylcobinamide-GDP ribazoletransferase (259 aa).

7 helical membrane-spanning segments follow: residues 36–56 (FSPL…ILLL), 65–85 (MPFI…VDGL), 108–128 (IGAS…AALF), 133–153 (LILF…IWAI), 175–195 (GFLI…FILI), 201–221 (IIST…ALII), and 238–258 (GASV…ILPA).

Belongs to the CobS family. Requires Mg(2+) as cofactor.

It localises to the cell inner membrane. It carries out the reaction alpha-ribazole + adenosylcob(III)inamide-GDP = adenosylcob(III)alamin + GMP + H(+). It catalyses the reaction alpha-ribazole 5'-phosphate + adenosylcob(III)inamide-GDP = adenosylcob(III)alamin 5'-phosphate + GMP + H(+). The protein operates within cofactor biosynthesis; adenosylcobalamin biosynthesis; adenosylcobalamin from cob(II)yrinate a,c-diamide: step 7/7. Joins adenosylcobinamide-GDP and alpha-ribazole to generate adenosylcobalamin (Ado-cobalamin). Also synthesizes adenosylcobalamin 5'-phosphate from adenosylcobinamide-GDP and alpha-ribazole 5'-phosphate. The sequence is that of Adenosylcobinamide-GDP ribazoletransferase from Prochlorococcus marinus (strain SARG / CCMP1375 / SS120).